Consider the following 152-residue polypeptide: MTITDLVLILFIAALLAFAIYDQFIMPRRNGPTLLAIPLLRRGRIDSVIFVGLIVILIYNNVTNHGALITTWLLSALALMGFYIFWIRVPKIIFKQKGFFFANVWIEYSRIKAMNLSEDGVLVMQLEQRRLLIRVRNIDDLEKVYKLLVSTQ.

Helical transmembrane passes span 6-26 (LVLI…QFIM), 45-65 (IDSV…VTNH), and 67-87 (ALIT…IFWI).

The protein belongs to the UPF0266 family.

It is found in the cell inner membrane. The polypeptide is UPF0266 membrane protein YobD (Escherichia coli O45:K1 (strain S88 / ExPEC)).